A 159-amino-acid polypeptide reads, in one-letter code: MRIGHGFDVHAFGGEGPIIIGGVRIPYEKGLLAHSDGDVALHALTDALLGAAALGDIGKLFPDTDPAFKGADSRELLREAWRRIQAKGYTLGNVDVTIIAQAPKMLPHIPQMRVFIAEDLGCHMDDVNVKATTTEKLGFTGRGEGIACEAVALLRKAEK.

A divalent metal cation contacts are provided by Asp8 and His10. 4-CDP-2-C-methyl-D-erythritol 2-phosphate-binding positions include 8 to 10 (DVH) and 34 to 35 (HS). His42 contacts a divalent metal cation. Residues 56-58 (DIG), 61-65 (FPDTD), 100-106 (AQAPKML), 132-135 (TTTE), Phe139, and Arg142 each bind 4-CDP-2-C-methyl-D-erythritol 2-phosphate.

Belongs to the IspF family. Homotrimer. A divalent metal cation is required as a cofactor.

The enzyme catalyses 4-CDP-2-C-methyl-D-erythritol 2-phosphate = 2-C-methyl-D-erythritol 2,4-cyclic diphosphate + CMP. It participates in isoprenoid biosynthesis; isopentenyl diphosphate biosynthesis via DXP pathway; isopentenyl diphosphate from 1-deoxy-D-xylulose 5-phosphate: step 4/6. Involved in the biosynthesis of isopentenyl diphosphate (IPP) and dimethylallyl diphosphate (DMAPP), two major building blocks of isoprenoid compounds. Catalyzes the conversion of 4-diphosphocytidyl-2-C-methyl-D-erythritol 2-phosphate (CDP-ME2P) to 2-C-methyl-D-erythritol 2,4-cyclodiphosphate (ME-CPP) with a corresponding release of cytidine 5-monophosphate (CMP). The protein is 2-C-methyl-D-erythritol 2,4-cyclodiphosphate synthase of Klebsiella pneumoniae (strain 342).